The following is a 165-amino-acid chain: Nucleotide-binding protein Ccur92_01650 (165 aa).

The protein belongs to the YajQ family.

Functionally, nucleotide-binding protein. The chain is Nucleotide-binding protein Ccur92_01650 from Campylobacter curvus (strain 525.92).